The following is a 262-amino-acid chain: Octopine permease ATP-binding protein P (262 aa).

The 246-residue stretch at 9 to 254 (VQLKDIRKNF…PRTDRFRQFL (246 aa)) folds into the ABC transporter domain. 41–48 (GSSGSGKS) is a binding site for ATP.

It belongs to the ABC transporter superfamily.

It localises to the cell inner membrane. In terms of biological role, component of the octopine active transport system probably consisting of four subunits: Q, M, P and T. This is Octopine permease ATP-binding protein P (occP) from Rhizobium radiobacter (Agrobacterium tumefaciens).